Consider the following 609-residue polypeptide: Replication factor A protein 1 (609 aa).

The span at 130–152 (QNEQNNASAPRTGISTSTNSFYG) shows a compositional bias: polar residues. The interval 130-166 (QNEQNNASAPRTGISTSTNSFYGNNAAATAPAPPPMM) is disordered. The OB DNA-binding region spans 192-278 (WTIRARVTNK…NEYELMFERD (87 aa)). The C4-type zinc-finger motif lies at 477–498 (CPAADCNKKVFDQGGSWRCEKC).

The protein belongs to the replication factor A protein 1 family. Component of the heterotrimeric canonical replication protein A complex (RPA).

It is found in the nucleus. As part of the replication protein A (RPA/RP-A), a single-stranded DNA-binding heterotrimeric complex, may play an essential role in DNA replication, recombination and repair. Binds and stabilizes single-stranded DNA intermediates, preventing complementary DNA reannealing and recruiting different proteins involved in DNA metabolism. This is Replication factor A protein 1 (ssb1) from Schizosaccharomyces pombe (strain 972 / ATCC 24843) (Fission yeast).